A 236-amino-acid polypeptide reads, in one-letter code: 5'-methylthioadenosine/S-adenosylhomocysteine nucleosidase (236 aa).

The Proton acceptor role is filled by E12. Residues G78, M153, and M174–E175 contribute to the substrate site. D198 serves as the catalytic Proton donor.

This sequence belongs to the PNP/UDP phosphorylase family. MtnN subfamily.

The catalysed reaction is S-adenosyl-L-homocysteine + H2O = S-(5-deoxy-D-ribos-5-yl)-L-homocysteine + adenine. The enzyme catalyses S-methyl-5'-thioadenosine + H2O = 5-(methylsulfanyl)-D-ribose + adenine. It catalyses the reaction 5'-deoxyadenosine + H2O = 5-deoxy-D-ribose + adenine. Its pathway is amino-acid biosynthesis; L-methionine biosynthesis via salvage pathway; S-methyl-5-thio-alpha-D-ribose 1-phosphate from S-methyl-5'-thioadenosine (hydrolase route): step 1/2. Functionally, catalyzes the irreversible cleavage of the glycosidic bond in both 5'-methylthioadenosine (MTA) and S-adenosylhomocysteine (SAH/AdoHcy) to adenine and the corresponding thioribose, 5'-methylthioribose and S-ribosylhomocysteine, respectively. Also cleaves 5'-deoxyadenosine, a toxic by-product of radical S-adenosylmethionine (SAM) enzymes, into 5-deoxyribose and adenine. In Geobacillus thermodenitrificans (strain NG80-2), this protein is 5'-methylthioadenosine/S-adenosylhomocysteine nucleosidase.